A 383-amino-acid polypeptide reads, in one-letter code: Small ribosomal subunit protein mS31 (383 aa).

Residues 1 to 21 (MLRSLCSIAVRLGGARQPRLL) constitute a mitochondrion transit peptide. Residues 158–187 (VNEAQIKLQEQRKALLNDVREKVEQEEVEE) are a coiled coil.

It belongs to the mitochondrion-specific ribosomal protein mS31 family. As to quaternary structure, component of the mitochondrial ribosome small subunit (28S) which comprises a 12S rRNA and about 30 distinct proteins.

Its subcellular location is the mitochondrion. This is Small ribosomal subunit protein mS31 (mrps-31) from Caenorhabditis elegans.